We begin with the raw amino-acid sequence, 557 residues long: NADP-dependent malic enzyme (557 aa).

Catalysis depends on Tyr88, which acts as the Proton donor. Position 141 (Arg141) interacts with NADP(+). Lys159 serves as the catalytic Proton acceptor. Residues Glu231, Asp232, and Asp255 each contribute to the a divalent metal cation site. Asp255 is a binding site for NADP(+). Ser322 carries the phosphoserine modification. Asn394 is an NADP(+) binding site.

This sequence belongs to the malic enzymes family. In terms of assembly, homotetramer. Mg(2+) serves as cofactor. Mn(2+) is required as a cofactor.

It is found in the cytoplasm. It catalyses the reaction (S)-malate + NADP(+) = pyruvate + CO2 + NADPH. The catalysed reaction is oxaloacetate + H(+) = pyruvate + CO2. In terms of biological role, catalyzes the oxidative decarboxylation of (S)-malate in the presence of NADP(+) and divalent metal ions, and decarboxylation of oxaloacetate. The sequence is that of NADP-dependent malic enzyme (ME1) from Sus scrofa (Pig).